Reading from the N-terminus, the 140-residue chain is Large ribosomal subunit protein uL11 (140 aa).

It belongs to the universal ribosomal protein uL11 family. As to quaternary structure, part of the ribosomal stalk of the 50S ribosomal subunit. Interacts with L10 and the large rRNA to form the base of the stalk. L10 forms an elongated spine to which L12 dimers bind in a sequential fashion forming a multimeric L10(L12)X complex. In terms of processing, one or more lysine residues are methylated.

Its function is as follows. Forms part of the ribosomal stalk which helps the ribosome interact with GTP-bound translation factors. This Geotalea daltonii (strain DSM 22248 / JCM 15807 / FRC-32) (Geobacter daltonii) protein is Large ribosomal subunit protein uL11.